The chain runs to 493 residues: ATP synthase subunit beta, chloroplastic (493 aa).

An ATP-binding site is contributed by 170 to 177 (GGAGVGKT).

This sequence belongs to the ATPase alpha/beta chains family. In terms of assembly, F-type ATPases have 2 components, CF(1) - the catalytic core - and CF(0) - the membrane proton channel. CF(1) has five subunits: alpha(3), beta(3), gamma(1), delta(1), epsilon(1). CF(0) has four main subunits: a(1), b(1), b'(1) and c(9-12).

It is found in the plastid. The protein resides in the chloroplast thylakoid membrane. It carries out the reaction ATP + H2O + 4 H(+)(in) = ADP + phosphate + 5 H(+)(out). In terms of biological role, produces ATP from ADP in the presence of a proton gradient across the membrane. The catalytic sites are hosted primarily by the beta subunits. This chain is ATP synthase subunit beta, chloroplastic, found in Lachenalia pusilla (Cape cowslips).